A 539-amino-acid polypeptide reads, in one-letter code: Interleukin-2 receptor subunit beta (539 aa).

The signal sequence occupies residues 1 to 26 (MATIALPWSLSLYVFLLLLATPWASA). Over 27-240 (AVKNCSHLEC…RTRPADPMKE (214 aa)) the chain is Extracellular. Asparagine 30, asparagine 43, asparagine 55, and asparagine 71 each carry an N-linked (GlcNAc...) asparagine glycan. An intrachain disulfide couples cysteine 36 to cysteine 46. Cysteine 74 and cysteine 86 are oxidised to a cystine. Residues 135-235 (APHSLQVLHI…QPLTFRTRPA (101 aa)) enclose the Fibronectin type-III domain. 2 N-linked (GlcNAc...) asparagine glycosylation sites follow: asparagine 150 and asparagine 216. A WSXWS motif motif is present at residues 221-225 (WSPWS). Residues 241 to 268 (ILPMSWLRYLLLVLGCFSGFFSCVYILV) traverse the membrane as a helical segment. The Cytoplasmic portion of the chain corresponds to 269 to 539 (KCRYLGPWLK…LQAQDSVHLI (271 aa)). A Box 1 motif motif is present at residues 281-289 (LKCHIPDPS). Disordered regions lie at residues 395-419 (VEEDGSRLPEGSPHPPLLPLAGEQD), 440-465 (PNTAYGGSRAPEERSPLSLHEGLPSL), and 477-516 (LERMPEGDGEGLSANSSGEQASVPEGNLHGQDQDRGQGPI).

This sequence belongs to the type I cytokine receptor family. Type 4 subfamily. In terms of assembly, non-covalent dimer of an alpha and a beta subunit. IL2R exists in 3 different forms: a high affinity dimer, an intermediate affinity monomer (beta subunit), and a low affinity monomer (alpha subunit). The high and intermediate affinity forms also associate with a gamma subunit. Interacts with SHB upon interleukin stimulation.

It localises to the cell membrane. The protein resides in the cell surface. Receptor for interleukin-2. This beta subunit is involved in receptor mediated endocytosis and transduces the mitogenic signals of IL2. Probably in association with IL15RA, involved in the stimulation of neutrophil phagocytosis by IL15. In Mus musculus (Mouse), this protein is Interleukin-2 receptor subunit beta (Il2rb).